The sequence spans 168 residues: uncharacterized protein (168 aa).

The chain crosses the membrane as a helical span at residues 24–44; it reads FIGIVLFLAVLIIGILILILF. 2 disordered regions span residues 69 to 92 and 142 to 168; these read SPSS…NNSN and NNNN…TKNI. Low complexity predominate over residues 142–157; it reads NNNNNNNNNPPTNISN.

It is found in the membrane. This is an uncharacterized protein from Dictyostelium discoideum (Social amoeba).